A 670-amino-acid chain; its full sequence is ATP-dependent DNA helicase Rep (670 aa).

The 277-residue stretch at Met1–Ser277 folds into the UvrD-like helicase ATP-binding domain. Residues Ala22 to Thr29 and Arg275 contribute to the ATP site. The region spanning Gly278–Gly562 is the UvrD-like helicase C-terminal domain.

Belongs to the helicase family. UvrD subfamily. Homodimer.

It catalyses the reaction Couples ATP hydrolysis with the unwinding of duplex DNA by translocating in the 3'-5' direction.. The enzyme catalyses ATP + H2O = ADP + phosphate + H(+). Its function is as follows. Rep helicase is a single-stranded DNA-dependent ATPase involved in DNA replication; it can initiate unwinding at a nick in the DNA. It binds to the single-stranded DNA and acts in a progressive fashion along the DNA in the 3' to 5' direction. This chain is ATP-dependent DNA helicase Rep, found in Buchnera aphidicola subsp. Baizongia pistaciae (strain Bp).